The sequence spans 833 residues: MSFYNHKEIEPKWQGYWAEHHTFKTGTDTSKPKFYALDMFPYPSGAGLHVGHPEGYTATDILSRYKRAQGYNVLHPMGWDAFGLPAEQYAMDTGNDPAEFTAENIANFKRQINALGFSYDWDREVNTTDPNYYKWTQWIFTKLYEKGLAYEAEVPVNWVEELGTAIANEEVLPDGTSERGGYPVVRKPMRQWMLKITAYAERLLNDLDELDWSESIKDMQRNWIGKSTGANVTFKVKGTDKEFTVFTTRPDTLFGATFTVLAPEHELVDAITSSEQAEAVADYKHQASLKSDLARTDLAKEKTGVWTGAYAINPVNGKEMPIWIADYVLASYGTGAVMAVPAHDQRDWEFAKQFDLPIVEVLEGGNVEEAAYTEDGLHVNSDFLDGLNKEDAIAKIVAWLEEKGCGQEKVTYRLRDWLFSRQRYWGEPIPIIHWEDGTSTAVPETELPLVLPVTKDIRPSGTGESPLANLTDWLEVTREDGVKGRRETNTMPQWAGSSWYYLRYIDPHNTEKLADEDLLKQWLPVDIYVGGAEHAVLHLLYARFWHKFLYDLGVVPTKEPFQKLFNQGMILGTSYRDHRGALVATDKVEKRDGSFFHVETGEELEQAPAKMSKSLKNVVNPDDVVEQYGADTLRVYEMFMGPLDASIAWSEEGLEGSRKFLDRVYRLITSKEILAENNGALDKVYNETVKAVTEQIESLKFNTAIAQLMVFVNAANKEDKLYVDYAKGFIQLIAPFAPHLAEELWQTVAETGESISYVAWPTWDESKLVEDEIEIVVQIKGKVRAKLMVAKDLSREELQEIALADEKVKAEIDGKEIVKVIAVPNKLVNIVVK.

The short motif at 41 to 52 is the 'HIGH' region element; that stretch reads PYPSGAGLHVGH. A 'KMSKS' region motif is present at residues 610–614; it reads KMSKS. Lys613 provides a ligand contact to ATP.

Belongs to the class-I aminoacyl-tRNA synthetase family.

The protein resides in the cytoplasm. The enzyme catalyses tRNA(Leu) + L-leucine + ATP = L-leucyl-tRNA(Leu) + AMP + diphosphate. In Streptococcus pneumoniae serotype 4 (strain ATCC BAA-334 / TIGR4), this protein is Leucine--tRNA ligase.